Here is a 155-residue protein sequence, read N- to C-terminus: Phosphoprotein pp24 (155 aa).

Residues 1–50 (MEFEAEHEGLTASWVAPAPQGGKGAEGRAGVADEAGHGKTEAECAEDGEK) form a disordered region. Basic and acidic residues predominate over residues 34–50 (EAGHGKTEAECAEDGEK). Residues 76 to 107 (RKRIEAKYMDLLVEAERENKNLRKKYNIILDV) are a coiled coil.

In Gallus gallus (Chicken), this protein is Phosphoprotein pp24 (MDV008).